Consider the following 588-residue polypeptide: ATP-dependent lipid A-core flippase (588 aa).

A run of 6 helical transmembrane segments spans residues 23–43 (FWPVLLLGVLANILYSGIDAG), 56–76 (FITIDLDFVKQIPLIVLIGIT), 141–161 (DALTDFIQNICLVIGLLTVMM), 162–182 (VICWQLSLMFLLTIPFVGIIV), 257–277 (LVIAIGIAMIIMAAIHLSTVI), and 278–298 (TISAGSFLAIIAAMLQLIKPM). The region spanning 28–310 (LLGVLANILY…LTTLNATIQR (283 aa)) is the ABC transmembrane type-1 domain. The ABC transporter domain occupies 342–576 (IEFKHVYHAY…DGHYAQLYKV (235 aa)). 375–382 (GHSGSGKT) provides a ligand contact to ATP.

It belongs to the ABC transporter superfamily. Lipid exporter (TC 3.A.1.106) family. In terms of assembly, homodimer.

The protein resides in the cell inner membrane. The enzyme catalyses ATP + H2O + lipid A-core oligosaccharideSide 1 = ADP + phosphate + lipid A-core oligosaccharideSide 2.. In terms of biological role, involved in lipopolysaccharide (LPS) biosynthesis. Translocates lipid A-core from the inner to the outer leaflet of the inner membrane. Transmembrane domains (TMD) form a pore in the inner membrane and the ATP-binding domain (NBD) is responsible for energy generation. The sequence is that of ATP-dependent lipid A-core flippase from Legionella pneumophila (strain Paris).